We begin with the raw amino-acid sequence, 400 residues long: Enoyl-[acyl-carrier-protein] reductase [NADH] (400 aa).

Residues 48-53 (GSSSGY), 74-75 (FE), 111-112 (DA), and 139-140 (LA) each bind NAD(+). Position 225 (tyrosine 225) interacts with substrate. Residue tyrosine 235 is the Proton donor of the active site. NAD(+) is bound by residues lysine 244 and 273–275 (VVT).

This sequence belongs to the TER reductase family. In terms of assembly, monomer.

The catalysed reaction is a 2,3-saturated acyl-[ACP] + NAD(+) = a (2E)-enoyl-[ACP] + NADH + H(+). It functions in the pathway lipid metabolism; fatty acid biosynthesis. Involved in the final reduction of the elongation cycle of fatty acid synthesis (FAS II). Catalyzes the reduction of a carbon-carbon double bond in an enoyl moiety that is covalently linked to an acyl carrier protein (ACP). This Shewanella frigidimarina (strain NCIMB 400) protein is Enoyl-[acyl-carrier-protein] reductase [NADH].